Here is a 1275-residue protein sequence, read N- to C-terminus: uncharacterized protein (1275 aa).

This is an uncharacterized protein from Homo sapiens (Human).